The sequence spans 120 residues: MKTQREKSVRRAQRNRIRLRKFANGRPRLSVYRSSKNIYAQIIDDASGKTVVAASSLEEAAQKEHGKGWDTKAAELVGKLIAERAVKEGVKDVVFDRGGYIFHGRVKALAEAAREGGLNF.

Belongs to the universal ribosomal protein uL18 family. In terms of assembly, part of the 50S ribosomal subunit; part of the 5S rRNA/L5/L18/L25 subcomplex. Contacts the 5S and 23S rRNAs.

Its function is as follows. This is one of the proteins that bind and probably mediate the attachment of the 5S RNA into the large ribosomal subunit, where it forms part of the central protuberance. This Maricaulis maris (strain MCS10) (Caulobacter maris) protein is Large ribosomal subunit protein uL18.